Reading from the N-terminus, the 313-residue chain is Porphobilinogen deaminase (313 aa).

At cysteine 242 the chain carries S-(dipyrrolylmethanemethyl)cysteine.

The protein belongs to the HMBS family. Monomer. It depends on dipyrromethane as a cofactor.

The enzyme catalyses 4 porphobilinogen + H2O = hydroxymethylbilane + 4 NH4(+). Its pathway is porphyrin-containing compound metabolism; protoporphyrin-IX biosynthesis; coproporphyrinogen-III from 5-aminolevulinate: step 2/4. Functionally, tetrapolymerization of the monopyrrole PBG into the hydroxymethylbilane pre-uroporphyrinogen in several discrete steps. The polypeptide is Porphobilinogen deaminase (Yersinia pseudotuberculosis serotype O:1b (strain IP 31758)).